Consider the following 429-residue polypeptide: L-cysteine:1D-myo-inositol 2-amino-2-deoxy-alpha-D-glucopyranoside ligase (429 aa).

C60 is a binding site for Zn(2+). L-cysteinyl-5'-AMP contacts are provided by residues 60–63 (CGIT), T75, and 98–100 (NIT). Residues 62 to 72 (ITPYDATHLGH) carry the 'HIGH' region motif. A 'ERGGDP' region motif is present at residues 204-209 (ERGGDP). Position 244 (W244) interacts with L-cysteinyl-5'-AMP. C248 is a Zn(2+) binding site. An L-cysteinyl-5'-AMP-binding site is contributed by 266 to 268 (GSD). H273 provides a ligand contact to Zn(2+). I300 is an L-cysteinyl-5'-AMP binding site. Residues 306-310 (KMSKS) carry the 'KMSKS' region motif.

This sequence belongs to the class-I aminoacyl-tRNA synthetase family. MshC subfamily. In terms of assembly, monomer. Zn(2+) serves as cofactor.

The catalysed reaction is 1D-myo-inositol 2-amino-2-deoxy-alpha-D-glucopyranoside + L-cysteine + ATP = 1D-myo-inositol 2-(L-cysteinylamino)-2-deoxy-alpha-D-glucopyranoside + AMP + diphosphate + H(+). In terms of biological role, catalyzes the ATP-dependent condensation of GlcN-Ins and L-cysteine to form L-Cys-GlcN-Ins. This chain is L-cysteine:1D-myo-inositol 2-amino-2-deoxy-alpha-D-glucopyranoside ligase, found in Mycolicibacterium vanbaalenii (strain DSM 7251 / JCM 13017 / BCRC 16820 / KCTC 9966 / NRRL B-24157 / PYR-1) (Mycobacterium vanbaalenii).